Here is a 690-residue protein sequence, read N- to C-terminus: Eukaryotic translation initiation factor 3 subunit B (690 aa).

Residues Met-1–Gly-11 show a composition bias toward basic and acidic residues. Positions Met-1 to Ser-36 are disordered. The span at Asn-15–Phe-25 shows a compositional bias: acidic residues. Positions Ser-57 to Asp-141 constitute an RRM domain. 5 WD repeats span residues Thr-207–Lys-246, Asp-293–Leu-331, Ile-334–Glu-369, Glu-442–Leu-484, and Pro-530–Thr-575. A coiled-coil region spans residues Glu-595 to Arg-645.

It belongs to the eIF-3 subunit B family. In terms of assembly, component of the eukaryotic translation initiation factor 3 (eIF-3) complex. The eIF-3 complex interacts with pix. Interacts with mxt.

The protein resides in the cytoplasm. Its function is as follows. RNA-binding component of the eukaryotic translation initiation factor 3 (eIF-3) complex, which is involved in protein synthesis of a specialized repertoire of mRNAs and, together with other initiation factors, stimulates binding of mRNA and methionyl-tRNAi to the 40S ribosome. The eIF-3 complex specifically targets and initiates translation of a subset of mRNAs involved in cell proliferation. This Drosophila erecta (Fruit fly) protein is Eukaryotic translation initiation factor 3 subunit B.